Here is a 132-residue protein sequence, read N- to C-terminus: Agouti-signaling protein (132 aa).

Residues 1 to 22 (MDVTRLLLATLLVFLCFFTADS) form the signal peptide. N-linked (GlcNAc...) asparagine glycosylation is present at Asn-39. Positions 62-85 (ISRKEAEKKRSSKKEASMKTVARP) are disordered. A compositionally biased stretch (basic and acidic residues) spans 63-78 (SRKEAEKKRSSKKEAS). 5 disulfides stabilise this stretch: Cys-93/Cys-108, Cys-100/Cys-114, Cys-107/Cys-125, Cys-111/Cys-132, and Cys-116/Cys-123. In terms of domain architecture, Agouti spans 93–132 (CVATRNSCKPPAPACCDPCASCQCRFFRSACSCRVLSLNC).

It is found in the secreted. Involved in the regulation of melanogenesis. The binding of ASP to MC1R precludes alpha-MSH initiated signaling and thus blocks production of cAMP, leading to a down-regulation of eumelanogenesis (brown/black pigment) and thus increasing synthesis of pheomelanin (yellow/red pigment). The protein is Agouti-signaling protein (ASIP) of Pongo pygmaeus (Bornean orangutan).